A 618-amino-acid polypeptide reads, in one-letter code: Acetolactate synthase (618 aa).

The interval 1 to 30 (MSAPTKPHSPTFKPEPHSAANEPKHPAARP) is disordered. Thiamine diphosphate is bound at residue Glu85. Residues Arg187, 293 to 314 (HGTVAAVAALQRSDLLIALGTR), and 336 to 355 (DIDPAEIGKNRHADVPIVGD) each bind FAD. Residues 429–509 (QHQMWAAQFI…VKVALINNGN (81 aa)) are thiamine pyrophosphate binding. Positions 480 and 507 each coordinate Mg(2+).

Belongs to the TPP enzyme family. Requires Mg(2+) as cofactor. Thiamine diphosphate serves as cofactor.

It carries out the reaction 2 pyruvate + H(+) = (2S)-2-acetolactate + CO2. It functions in the pathway amino-acid biosynthesis; L-isoleucine biosynthesis; L-isoleucine from 2-oxobutanoate: step 1/4. It participates in amino-acid biosynthesis; L-valine biosynthesis; L-valine from pyruvate: step 1/4. This chain is Acetolactate synthase (ilvB), found in Mycobacterium bovis (strain ATCC BAA-935 / AF2122/97).